The following is a 348-amino-acid chain: UDP-3-O-acylglucosamine N-acyltransferase (348 aa).

The Proton acceptor role is filled by H257.

The protein belongs to the transferase hexapeptide repeat family. LpxD subfamily. As to quaternary structure, homotrimer.

It catalyses the reaction a UDP-3-O-[(3R)-3-hydroxyacyl]-alpha-D-glucosamine + a (3R)-hydroxyacyl-[ACP] = a UDP-2-N,3-O-bis[(3R)-3-hydroxyacyl]-alpha-D-glucosamine + holo-[ACP] + H(+). The protein operates within bacterial outer membrane biogenesis; LPS lipid A biosynthesis. Catalyzes the N-acylation of UDP-3-O-acylglucosamine using 3-hydroxyacyl-ACP as the acyl donor. Is involved in the biosynthesis of lipid A, a phosphorylated glycolipid that anchors the lipopolysaccharide to the outer membrane of the cell. The chain is UDP-3-O-acylglucosamine N-acyltransferase from Bartonella quintana (strain Toulouse) (Rochalimaea quintana).